Here is a 461-residue protein sequence, read N- to C-terminus: Photosystem II CP43 reaction center protein (461 aa).

Positions 1 to 2 (ME) are excised as a propeptide. Residue Thr3 is modified to N-acetylthreonine. At Thr3 the chain carries Phosphothreonine. Helical transmembrane passes span 57–81 (LFEV…PHLA), 122–143 (LLGP…KDRN), 166–188 (KALY…RKIS), 243–263 (KPFA…LSYS), and 279–300 (WFNN…ASQA). Residue Glu355 coordinates [CaMn4O5] cluster. A helical transmembrane segment spans residues 435-459 (RARAAAAGFEKGIDRDFEPVLSMTP).

This sequence belongs to the PsbB/PsbC family. PsbC subfamily. As to quaternary structure, PSII is composed of 1 copy each of membrane proteins PsbA, PsbB, PsbC, PsbD, PsbE, PsbF, PsbH, PsbI, PsbJ, PsbK, PsbL, PsbM, PsbT, PsbX, PsbY, PsbZ, Psb30/Ycf12, at least 3 peripheral proteins of the oxygen-evolving complex and a large number of cofactors. It forms dimeric complexes. The cofactor is Binds multiple chlorophylls and provides some of the ligands for the Ca-4Mn-5O cluster of the oxygen-evolving complex. It may also provide a ligand for a Cl- that is required for oxygen evolution. PSII binds additional chlorophylls, carotenoids and specific lipids..

The protein resides in the plastid. Its subcellular location is the chloroplast thylakoid membrane. Its function is as follows. One of the components of the core complex of photosystem II (PSII). It binds chlorophyll and helps catalyze the primary light-induced photochemical processes of PSII. PSII is a light-driven water:plastoquinone oxidoreductase, using light energy to abstract electrons from H(2)O, generating O(2) and a proton gradient subsequently used for ATP formation. This is Photosystem II CP43 reaction center protein from Trachelium caeruleum (Blue throatwort).